A 273-amino-acid polypeptide reads, in one-letter code: uncharacterized protein (273 aa).

The 103-residue stretch at 29–131 (TLVCVHGFLS…VVLLCSSGYL (103 aa)) folds into the AB hydrolase-1 domain. Catalysis depends on residues Ser-102 and His-254.

This sequence belongs to the DmpD/TodF/XylF esterase family.

This is an uncharacterized protein from Bacillus subtilis (strain 168).